Reading from the N-terminus, the 873-residue chain is Alanine--tRNA ligase (873 aa).

Residues H559, H563, C661, and H665 each coordinate Zn(2+).

Belongs to the class-II aminoacyl-tRNA synthetase family. The cofactor is Zn(2+).

Its subcellular location is the cytoplasm. The enzyme catalyses tRNA(Ala) + L-alanine + ATP = L-alanyl-tRNA(Ala) + AMP + diphosphate. Catalyzes the attachment of alanine to tRNA(Ala) in a two-step reaction: alanine is first activated by ATP to form Ala-AMP and then transferred to the acceptor end of tRNA(Ala). Also edits incorrectly charged Ser-tRNA(Ala) and Gly-tRNA(Ala) via its editing domain. The protein is Alanine--tRNA ligase of Acaryochloris marina (strain MBIC 11017).